The chain runs to 210 residues: Dephospho-CoA kinase (210 aa).

The region spanning 15–210 is the DPCK domain; it reads VLGLTGGIGC…HKGYLKLALK (196 aa). 23 to 28 contacts ATP; sequence GCGKTA.

Belongs to the CoaE family.

Its subcellular location is the cytoplasm. The catalysed reaction is 3'-dephospho-CoA + ATP = ADP + CoA + H(+). It functions in the pathway cofactor biosynthesis; coenzyme A biosynthesis; CoA from (R)-pantothenate: step 5/5. Catalyzes the phosphorylation of the 3'-hydroxyl group of dephosphocoenzyme A to form coenzyme A. In Pseudoalteromonas translucida (strain TAC 125), this protein is Dephospho-CoA kinase.